Here is a 375-residue protein sequence, read N- to C-terminus: Putative glutamate--cysteine ligase 2 (375 aa).

Belongs to the glutamate--cysteine ligase type 2 family. YbdK subfamily.

The catalysed reaction is L-cysteine + L-glutamate + ATP = gamma-L-glutamyl-L-cysteine + ADP + phosphate + H(+). Its function is as follows. ATP-dependent carboxylate-amine ligase which exhibits weak glutamate--cysteine ligase activity. In Azoarcus sp. (strain BH72), this protein is Putative glutamate--cysteine ligase 2.